The sequence spans 404 residues: MTKEKIVLAYSGGLDTSVAIQWLVESGYEVIACCLDVGEGKNLDFIKEKAITVGASESYTIDAKEEFAEDFALIALQAHAYYEGKYPLISALSRPLIAKKLVEVARQEGASAIAHGCTGKGNDQVRFEVAIHALAPDLKVISPVRDWKWSREEEINYAKEHNIPVPIDLDNPFSIDQNLWGRSNECGVLENPWTTPPEAAYDLTVSLEDAPDTADIVEITFDAGIPISLNGENMSLANLILTLNEIAGKHGVGRIDHIENRLVGIKSREVYECPAAVTLIKAHKELEDLTFVREVAHFKPIIEQKISETIYNGLWFSPLTEALVAFLKSTQKFVNGTIRVKLFKGHAIVEGRKSPNSLYDENLATYTSSDTFDQDAAVGFIKLWGLPTKVSAEVNSKVTITTEV.

Residue 9–17 (AYSGGLDTS) participates in ATP binding. An L-citrulline-binding site is contributed by Tyr86. Gly116 lines the ATP pocket. The L-aspartate site is built by Thr118, Asn122, and Asp123. Asn122 contributes to the L-citrulline binding site. L-citrulline is bound by residues Arg126, Ser174, Ser183, Glu259, and Tyr271.

The protein belongs to the argininosuccinate synthase family. Type 1 subfamily. In terms of assembly, homotetramer.

Its subcellular location is the cytoplasm. It catalyses the reaction L-citrulline + L-aspartate + ATP = 2-(N(omega)-L-arginino)succinate + AMP + diphosphate + H(+). It participates in amino-acid biosynthesis; L-arginine biosynthesis; L-arginine from L-ornithine and carbamoyl phosphate: step 2/3. The protein is Argininosuccinate synthase of Listeria welshimeri serovar 6b (strain ATCC 35897 / DSM 20650 / CCUG 15529 / CIP 8149 / NCTC 11857 / SLCC 5334 / V8).